The primary structure comprises 79 residues: Cell division protein ZapB (79 aa).

Residues 1 to 78 are a coiled coil; it reads MSLEALDQLQ…LNSLLGKMDD (78 aa).

This sequence belongs to the ZapB family. In terms of assembly, homodimer. The ends of the coiled-coil dimer bind to each other, forming polymers. Interacts with FtsZ.

The protein localises to the cytoplasm. In terms of biological role, non-essential, abundant cell division factor that is required for proper Z-ring formation. It is recruited early to the divisome by direct interaction with FtsZ, stimulating Z-ring assembly and thereby promoting cell division earlier in the cell cycle. Its recruitment to the Z-ring requires functional FtsA or ZipA. The sequence is that of Cell division protein ZapB from Hamiltonella defensa subsp. Acyrthosiphon pisum (strain 5AT).